A 309-amino-acid chain; its full sequence is Malate dehydrogenase (309 aa).

NAD(+) contacts are provided by residues 9 to 14 (GAGFVG) and D33. 2 residues coordinate substrate: R82 and R88. NAD(+)-binding positions include N95 and 118 to 120 (VNN). Substrate contacts are provided by N120 and R151. The Proton acceptor role is filled by H175.

Belongs to the LDH/MDH superfamily. MDH type 3 family.

It catalyses the reaction (S)-malate + NAD(+) = oxaloacetate + NADH + H(+). In terms of biological role, catalyzes the reversible oxidation of malate to oxaloacetate. This is Malate dehydrogenase from Roseiflexus castenholzii (strain DSM 13941 / HLO8).